The chain runs to 294 residues: uncharacterized protein (294 aa).

A signal peptide spans 1–19 (MFKRSLFILLLLAASLVKA).

This is an uncharacterized protein from Rickettsia felis (strain ATCC VR-1525 / URRWXCal2) (Rickettsia azadi).